A 401-amino-acid polypeptide reads, in one-letter code: Keratin-associated protein 10-4 (401 aa).

Repeat copies occupy residues 36–40 (CCEPP), 41–45 (CCAPS), 46–50 (CCAPA), 67–71 (CCPVT), 89–93 (CCQQS), 99–103 (CCASS), 109–113 (CCVPV), 114–118 (CCKTV), 119–123 (CCKPV), 124–128 (CCVPV), 129–133 (CCGDS), 135–139 (CCQQS), 145–149 (CCTSS), 155–159 (CCVPI), 160–164 (CCKPV), 172–176 (CCQQS), 186–190 (CCQAV), 208–212 (CCQQS), 218–222 (CCTSS), 228–232 (CCVPV), 233–237 (CCKTV), 238–242 (CCKPV), 250–254 (CCQQS), 270–274 (CCVPV), 275–279 (CCKPV), 280–284 (CCKPV), 297–301 (CCQQS), 307–311 (CCTSS), 317–321 (CCVPV), 322–326 (CCKPV), 339–343 (CCQQS), 349–353 (CCTTS), 354–358 (CCRPS), 373–377 (CCVPV), and 391–395 (CCRPA). A 36 X 5 AA repeats of C-C-X(3) region spans residues 36–395 (CCEPPCCAPS…SCQPSCCRPA (360 aa)).

This sequence belongs to the KRTAP type 10 family. As to quaternary structure, interacts with hair keratins. In terms of tissue distribution, restricted to hair root, not detected in any other tissues.

Functionally, in the hair cortex, hair keratin intermediate filaments are embedded in an interfilamentous matrix, consisting of hair keratin-associated proteins (KRTAP), which are essential for the formation of a rigid and resistant hair shaft through their extensive disulfide bond cross-linking with abundant cysteine residues of hair keratins. The matrix proteins include the high-sulfur and high-glycine-tyrosine keratins. The protein is Keratin-associated protein 10-4 (KRTAP10-4) of Homo sapiens (Human).